The chain runs to 120 residues: Large ribosomal subunit protein uL18 (120 aa).

Basic and acidic residues predominate over residues 1–10 (MKRTRTESVQ). The disordered stretch occupies residues 1–24 (MKRTRTESVQRRHSRIRRKVEGTP).

It belongs to the universal ribosomal protein uL18 family. Part of the 50S ribosomal subunit; part of the 5S rRNA/L5/L18/L25 subcomplex. Contacts the 5S and 23S rRNAs.

Its function is as follows. This is one of the proteins that bind and probably mediate the attachment of the 5S RNA into the large ribosomal subunit, where it forms part of the central protuberance. In Gloeothece citriformis (strain PCC 7424) (Cyanothece sp. (strain PCC 7424)), this protein is Large ribosomal subunit protein uL18.